We begin with the raw amino-acid sequence, 242 residues long: Ubiquinone biosynthesis O-methyltransferase (242 aa).

S-adenosyl-L-methionine-binding residues include Arg-44, Gly-64, Asp-85, and Met-129.

Belongs to the methyltransferase superfamily. UbiG/COQ3 family.

The catalysed reaction is a 3-demethylubiquinol + S-adenosyl-L-methionine = a ubiquinol + S-adenosyl-L-homocysteine + H(+). It catalyses the reaction a 3-(all-trans-polyprenyl)benzene-1,2-diol + S-adenosyl-L-methionine = a 2-methoxy-6-(all-trans-polyprenyl)phenol + S-adenosyl-L-homocysteine + H(+). It participates in cofactor biosynthesis; ubiquinone biosynthesis. In terms of biological role, O-methyltransferase that catalyzes the 2 O-methylation steps in the ubiquinone biosynthetic pathway. This Citrobacter koseri (strain ATCC BAA-895 / CDC 4225-83 / SGSC4696) protein is Ubiquinone biosynthesis O-methyltransferase.